The sequence spans 225 residues: Ribonuclease 3 (225 aa).

The RNase III domain maps to isoleucine 5–aspartate 127. Position 40 (glutamate 40) interacts with Mg(2+). The active site involves aspartate 44. Residues aspartate 113 and glutamate 116 each coordinate Mg(2+). Glutamate 116 is an active-site residue. One can recognise a DRBM domain in the interval aspartate 154–asparagine 224.

This sequence belongs to the ribonuclease III family. As to quaternary structure, homodimer. The cofactor is Mg(2+).

It is found in the cytoplasm. It catalyses the reaction Endonucleolytic cleavage to 5'-phosphomonoester.. Functionally, digests double-stranded RNA. Involved in the processing of primary rRNA transcript to yield the immediate precursors to the large and small rRNAs (23S and 16S). Processes some mRNAs, and tRNAs when they are encoded in the rRNA operon. Processes pre-crRNA and tracrRNA of type II CRISPR loci if present in the organism. The protein is Ribonuclease 3 of Vibrio atlanticus (strain LGP32) (Vibrio splendidus (strain Mel32)).